The primary structure comprises 207 residues: tRNA (pseudouridine(54)-N(1))-methyltransferase (207 aa).

Leu137 contacts S-adenosyl-L-methionine.

This sequence belongs to the methyltransferase superfamily. TrmY family. As to quaternary structure, homodimer.

Its subcellular location is the cytoplasm. It carries out the reaction pseudouridine(54) in tRNA + S-adenosyl-L-methionine = N(1)-methylpseudouridine(54) in tRNA + S-adenosyl-L-homocysteine + H(+). Specifically catalyzes the N1-methylation of pseudouridine at position 54 (Psi54) in tRNAs. This Halorubrum lacusprofundi (strain ATCC 49239 / DSM 5036 / JCM 8891 / ACAM 34) protein is tRNA (pseudouridine(54)-N(1))-methyltransferase.